Consider the following 671-residue polypeptide: DNA ligase (671 aa).

NAD(+) is bound by residues 32–36 (DAEYD), 81–82 (SL), and glutamate 113. Lysine 115 serves as the catalytic N6-AMP-lysine intermediate. Arginine 136, glutamate 173, lysine 290, and lysine 314 together coordinate NAD(+). Residues cysteine 408, cysteine 411, cysteine 426, and cysteine 432 each coordinate Zn(2+). One can recognise a BRCT domain in the interval 593-671 (EIDSPFAGKT…ETEMLRLLGS (79 aa)).

The protein belongs to the NAD-dependent DNA ligase family. LigA subfamily. It depends on Mg(2+) as a cofactor. The cofactor is Mn(2+).

It carries out the reaction NAD(+) + (deoxyribonucleotide)n-3'-hydroxyl + 5'-phospho-(deoxyribonucleotide)m = (deoxyribonucleotide)n+m + AMP + beta-nicotinamide D-nucleotide.. Its function is as follows. DNA ligase that catalyzes the formation of phosphodiester linkages between 5'-phosphoryl and 3'-hydroxyl groups in double-stranded DNA using NAD as a coenzyme and as the energy source for the reaction. It is essential for DNA replication and repair of damaged DNA. In Escherichia coli O81 (strain ED1a), this protein is DNA ligase.